Here is a 345-residue protein sequence, read N- to C-terminus: Nicotinate-nucleotide--dimethylbenzimidazole phosphoribosyltransferase (345 aa).

Catalysis depends on glutamate 311, which acts as the Proton acceptor.

It belongs to the CobT family.

It catalyses the reaction 5,6-dimethylbenzimidazole + nicotinate beta-D-ribonucleotide = alpha-ribazole 5'-phosphate + nicotinate + H(+). Its pathway is nucleoside biosynthesis; alpha-ribazole biosynthesis; alpha-ribazole from 5,6-dimethylbenzimidazole: step 1/2. In terms of biological role, catalyzes the synthesis of alpha-ribazole-5'-phosphate from nicotinate mononucleotide (NAMN) and 5,6-dimethylbenzimidazole (DMB). This chain is Nicotinate-nucleotide--dimethylbenzimidazole phosphoribosyltransferase, found in Janthinobacterium sp. (strain Marseille) (Minibacterium massiliensis).